A 371-amino-acid polypeptide reads, in one-letter code: 2-aminoethylphosphonate--pyruvate transaminase (371 aa).

K198 bears the N6-(pyridoxal phosphate)lysine mark.

It belongs to the class-V pyridoxal-phosphate-dependent aminotransferase family. PhnW subfamily. In terms of assembly, homodimer. Requires pyridoxal 5'-phosphate as cofactor.

It carries out the reaction (2-aminoethyl)phosphonate + pyruvate = phosphonoacetaldehyde + L-alanine. Its function is as follows. Involved in phosphonate degradation. This Syntrophobacter fumaroxidans (strain DSM 10017 / MPOB) protein is 2-aminoethylphosphonate--pyruvate transaminase.